A 750-amino-acid polypeptide reads, in one-letter code: Photosystem I P700 chlorophyll a apoprotein A1 (750 aa).

Helical transmembrane passes span 70 to 93 (VFSA…FHGA), 156 to 179 (LYST…FHYH), 195 to 219 (LNHH…HVSL), 291 to 309 (TVHH…GHMY), 346 to 369 (WHAQ…HHMY), 385 to 411 (LSLF…IFMV), 433 to 455 (AIVS…LYIH), and 531 to 549 (FLVH…LILL). [4Fe-4S] cluster is bound by residues Cys-573 and Cys-582. A run of 2 helical transmembrane segments spans residues 589-610 (HVFL…HFSW) and 664-686 (LSAY…MFLF). His-675 contributes to the chlorophyll a' binding site. Chlorophyll a-binding residues include Met-683 and Tyr-691. Position 692 (Trp-692) interacts with phylloquinone. The helical transmembrane segment at 724-744 (AVGVAHYLLGGIATTWAFFLA) threads the bilayer.

The protein belongs to the PsaA/PsaB family. In terms of assembly, the PsaA/B heterodimer binds the P700 chlorophyll special pair and subsequent electron acceptors. PSI consists of a core antenna complex that captures photons, and an electron transfer chain that converts photonic excitation into a charge separation. The eukaryotic PSI reaction center is composed of at least 11 subunits. P700 is a chlorophyll a/chlorophyll a' dimer, A0 is one or more chlorophyll a, A1 is one or both phylloquinones and FX is a shared 4Fe-4S iron-sulfur center. is required as a cofactor.

Its subcellular location is the plastid. It localises to the chloroplast thylakoid membrane. The catalysed reaction is reduced [plastocyanin] + hnu + oxidized [2Fe-2S]-[ferredoxin] = oxidized [plastocyanin] + reduced [2Fe-2S]-[ferredoxin]. PsaA and PsaB bind P700, the primary electron donor of photosystem I (PSI), as well as the electron acceptors A0, A1 and FX. PSI is a plastocyanin-ferredoxin oxidoreductase, converting photonic excitation into a charge separation, which transfers an electron from the donor P700 chlorophyll pair to the spectroscopically characterized acceptors A0, A1, FX, FA and FB in turn. Oxidized P700 is reduced on the lumenal side of the thylakoid membrane by plastocyanin. The protein is Photosystem I P700 chlorophyll a apoprotein A1 of Huperzia lucidula (Shining clubmoss).